The following is a 287-amino-acid chain: Homoserine kinase (287 aa).

Pro78–Ser88 contacts ATP.

Belongs to the GHMP kinase family. Homoserine kinase subfamily.

It localises to the cytoplasm. It carries out the reaction L-homoserine + ATP = O-phospho-L-homoserine + ADP + H(+). The protein operates within amino-acid biosynthesis; L-threonine biosynthesis; L-threonine from L-aspartate: step 4/5. Catalyzes the ATP-dependent phosphorylation of L-homoserine to L-homoserine phosphate. The polypeptide is Homoserine kinase (Lactobacillus acidophilus (strain ATCC 700396 / NCK56 / N2 / NCFM)).